We begin with the raw amino-acid sequence, 118 residues long: Ribonuclease P protein component (118 aa).

This sequence belongs to the RnpA family. As to quaternary structure, consists of a catalytic RNA component (M1 or rnpB) and a protein subunit.

The catalysed reaction is Endonucleolytic cleavage of RNA, removing 5'-extranucleotides from tRNA precursor.. Functionally, RNaseP catalyzes the removal of the 5'-leader sequence from pre-tRNA to produce the mature 5'-terminus. It can also cleave other RNA substrates such as 4.5S RNA. The protein component plays an auxiliary but essential role in vivo by binding to the 5'-leader sequence and broadening the substrate specificity of the ribozyme. In Shewanella frigidimarina (strain NCIMB 400), this protein is Ribonuclease P protein component.